The primary structure comprises 266 residues: Undecaprenyl-diphosphatase (266 aa).

7 helical membrane passes run 41–61, 82–102, 106–126, 159–179, 191–211, 213–233, and 246–266; these read YAYS…LIYF, LVYI…LYYV, WLVV…AVVL, AVSV…LLLL, FVLV…SEGG, VATA…IITI, and VLVN…RIIF.

This sequence belongs to the UppP family.

It is found in the cell membrane. It carries out the reaction di-trans,octa-cis-undecaprenyl diphosphate + H2O = di-trans,octa-cis-undecaprenyl phosphate + phosphate + H(+). Its function is as follows. Catalyzes the dephosphorylation of undecaprenyl diphosphate (UPP). In Pyrobaculum aerophilum (strain ATCC 51768 / DSM 7523 / JCM 9630 / CIP 104966 / NBRC 100827 / IM2), this protein is Undecaprenyl-diphosphatase.